A 344-amino-acid polypeptide reads, in one-letter code: tRNA N6-adenosine threonylcarbamoyltransferase (344 aa).

The Fe cation site is built by histidine 111 and histidine 115. Residues 136–140 (LVSGG), aspartate 169, glycine 182, and asparagine 279 contribute to the substrate site. Aspartate 307 serves as a coordination point for Fe cation.

The protein belongs to the KAE1 / TsaD family. Fe(2+) serves as cofactor.

The protein resides in the cytoplasm. The enzyme catalyses L-threonylcarbamoyladenylate + adenosine(37) in tRNA = N(6)-L-threonylcarbamoyladenosine(37) in tRNA + AMP + H(+). Its function is as follows. Required for the formation of a threonylcarbamoyl group on adenosine at position 37 (t(6)A37) in tRNAs that read codons beginning with adenine. Is involved in the transfer of the threonylcarbamoyl moiety of threonylcarbamoyl-AMP (TC-AMP) to the N6 group of A37, together with TsaE and TsaB. TsaD likely plays a direct catalytic role in this reaction. The protein is tRNA N6-adenosine threonylcarbamoyltransferase of Mannheimia succiniciproducens (strain KCTC 0769BP / MBEL55E).